The sequence spans 373 residues: Putative 8-amino-7-oxononanoate synthase (373 aa).

Arg18 provides a ligand contact to substrate. 93 to 94 (GF) is a pyridoxal 5'-phosphate binding site. Residue His118 coordinates substrate. Pyridoxal 5'-phosphate is bound by residues Ser166, 191 to 194 (DEAH), and 220 to 223 (TLSK). Lys223 is subject to N6-(pyridoxal phosphate)lysine. Thr337 is a substrate binding site.

This sequence belongs to the class-II pyridoxal-phosphate-dependent aminotransferase family. BioF subfamily. In terms of assembly, homodimer. The cofactor is pyridoxal 5'-phosphate.

It catalyses the reaction 6-carboxyhexanoyl-[ACP] + L-alanine + H(+) = (8S)-8-amino-7-oxononanoate + holo-[ACP] + CO2. It functions in the pathway cofactor biosynthesis; biotin biosynthesis. Its function is as follows. Catalyzes the decarboxylative condensation of pimeloyl-[acyl-carrier protein] and L-alanine to produce 8-amino-7-oxononanoate (AON), [acyl-carrier protein], and carbon dioxide. The polypeptide is Putative 8-amino-7-oxononanoate synthase (bioF) (Aquifex aeolicus (strain VF5)).